The chain runs to 786 residues: MSINLTIDICIYLLSNARNLCGKHRSKQLHLVCSPNHCWKIRHVSLQRGLHPHKVRCKWTKSETHSCSKHYYSPSNHGLHIGILKLSTSAPKGLTKVSIRMSRIKSTLNSVSKAVFGSQNEMISRLAQFKPSSRILRKVSDSGWLKQESIKQAIRSLKKYSDKSTEKSPVPEGRNHIIDKEDDIGKQSLFHYTGNITTKFGESFYFLSNHINSYFKRAEKMSQDKENSHFQEKSELEGKKVEEGKSSSLDPGILTSQADKPDPKSSAGTMDKATSPSGTPESLPISTKQSIANFLSRPTEGVQALVGGYIGGLVPKLKYDSKSQAEEQEEPAKSEPAGSKDKTVEEKKHLSLQREKIIARVSIDNRTRALVQALRRTADPKLCITRVEELTFHLLEFPEGKGVAVKERLIPCLLRLRQMKDETLQAAVREILALIGYVDPVKGRGIRILTIDGGGTRGVVALQTLRKLVELTQKPVHQLFDYICGVSTGAILAFMLGLFHLPLDECEELYRKLGSDIFSQNVIVGTVKMSWSHAFYDSQTWEKILKERMGSALMIETARNPMCPKVAAVSTIVNRGSTPKAFVFRNYGHFPGSQSHYLGGCQYKMWQAIRASSAAPGYFAEYALGNDLHQDGGLLLNNPSALAMHECKCLWPDAPLECIVSLGTGRYESDVRNNTTYTSLKTKLSNVINSATDTEEVHIMLDGLLPPDTYFRFNPVMCENIPLDESRNEKLDQLQLEGSKYIERNEHKMKKVAKILSQEKTTLQKINDWIKLKTDMYEGLPFFSKL.

N-linked (GlcNAc...) asparagine glycosylation is present at Asn-4. Disordered stretches follow at residues 158–180, 225–285, and 321–348; these read KKYS…IIDK, KENS…SLPI, and SKSQ…EEKK. Positions 225–245 are enriched in basic and acidic residues; the sequence is KENSHFQEKSELEGKKVEEGK. 2 stretches are compositionally biased toward polar residues: residues 246-258 and 266-285; these read SSSL…TSQA and SAGT…SLPI. Positions 449-644 constitute a PNPLA domain; that stretch reads LTIDGGGTRG…LLNNPSALAM (196 aa). The GXGXXG motif lies at 453-458; sequence GGGTRG. Residues 483 to 503 traverse the membrane as a helical segment; that stretch reads ICGVSTGAILAFMLGLFHLPL. A GXSXG motif is present at residues 485–489; it reads GVSTG. Ser-487 serves as the catalytic Nucleophile. Asp-631 functions as the Proton acceptor in the catalytic mechanism. The short motif at 631–633 is the DGA/G element; it reads DGG. The residue at position 740 (Lys-740) is an N6-succinyllysine.

Expressed in kidney, heart and brain.

Its subcellular location is the endoplasmic reticulum membrane. The protein resides in the mitochondrion membrane. It localises to the peroxisome membrane. The catalysed reaction is a 1,2-diacyl-sn-glycero-3-phosphocholine + H2O = a 1-acyl-sn-glycero-3-phosphocholine + a fatty acid + H(+). It catalyses the reaction a 1,2-diacyl-sn-glycero-3-phosphocholine + H2O = a 2-acyl-sn-glycero-3-phosphocholine + a fatty acid + H(+). It carries out the reaction a 1,2-diacyl-sn-glycero-3-phosphoethanolamine + H2O = a 1-acyl-sn-glycero-3-phosphoethanolamine + a fatty acid + H(+). The enzyme catalyses a 1-O-(1Z-alkenyl)-2-acyl-sn-glycero-3-phosphocholine + H2O = a 1-O-(1Z-alkenyl)-sn-glycero-3-phosphocholine + a fatty acid + H(+). The catalysed reaction is a 1-acyl-sn-glycero-3-phosphocholine + H2O = sn-glycerol 3-phosphocholine + a fatty acid + H(+). It catalyses the reaction 1-acyl-2-(9Z,12Z)-octadecadienoyl-sn-glycero-3-phosphocholine + H2O = a 1-acyl-sn-glycero-3-phosphocholine + (9Z,12Z)-octadecadienoate + H(+). It carries out the reaction 1-acyl-2-(5Z,8Z,11Z,14Z-eicosatetraenoyl)-sn-glycero-3-phosphocholine + H2O = a 1-acyl-sn-glycero-3-phosphocholine + (5Z,8Z,11Z,14Z)-eicosatetraenoate + H(+). The enzyme catalyses 1-hexadecanoyl-2-(5Z,8Z,11Z,14Z-eicosatetraenoyl)-sn-glycero-3-phosphocholine + H2O = 1-hexadecanoyl-sn-glycero-3-phosphocholine + (5Z,8Z,11Z,14Z)-eicosatetraenoate + H(+). The catalysed reaction is 1-octadecanoyl-2-(9Z-octadecenoyl)-sn-glycero-3-phosphocholine + H2O = 1-octadecanoyl-sn-glycero-3-phosphocholine + (9Z)-octadecenoate + H(+). It catalyses the reaction 1-hexadecanoyl-2-(9Z-octadecenoyl)-sn-glycero-3-phosphocholine + H2O = 1-hexadecanoyl-sn-glycero-3-phosphocholine + (9Z)-octadecenoate + H(+). It carries out the reaction 1-hexadecanoyl-2-(9Z,12Z-octadecadienoyl)-sn-glycero-3-phosphocholine + H2O = (9Z,12Z)-octadecadienoate + 1-hexadecanoyl-sn-glycero-3-phosphocholine + H(+). The enzyme catalyses 1-acyl-2-(9Z,12Z)-octadecadienoyl-sn-glycero-3-phosphoethanolamine + H2O = a 1-acyl-sn-glycero-3-phosphoethanolamine + (9Z,12Z)-octadecadienoate + H(+). The catalysed reaction is 1-acyl-2-(5Z,8Z,11Z,14Z)-eicosatetraenoyl-sn-glycero-3-phosphoethanolamine + H2O = a 1-acyl-sn-glycero-3-phosphoethanolamine + (5Z,8Z,11Z,14Z)-eicosatetraenoate + H(+). It catalyses the reaction 1-hexadecanoyl-2-(5Z,8Z,11Z,14Z-eicosatetraenoyl)-sn-glycero-3-phosphoethanolamine + H2O = 1-hexadecanoyl-sn-glycero-3-phosphoethanolamine + (5Z,8Z,11Z,14Z)-eicosatetraenoate + H(+). It carries out the reaction 1-hexadecanoyl-2-(5Z,8Z,11Z,14Z-eicosatetraenoyl)-sn-glycero-3-phosphocholine + H2O = 2-(5Z,8Z,11Z,14Z)-eicosatetraenoyl-sn-glycero-3-phosphocholine + hexadecanoate + H(+). The enzyme catalyses 1-octadecanoyl-2-(9Z-octadecenoyl)-sn-glycero-3-phosphocholine + H2O = 2-(9Z-octadecenoyl)-sn-glycero-3-phosphocholine + octadecanoate + H(+). The catalysed reaction is 1-hexadecanoyl-2-(4Z,7Z,10Z,13Z,16Z,19Z-docosahexaenoyl)-sn-glycero-3-phosphocholine + H2O = 2-(4Z,7Z,10Z,13Z,16Z,19Z-docosahexaenoyl)-sn-glycero-3-phosphocholine + hexadecanoate + H(+). It catalyses the reaction 1-O-(1Z)-hexadecenyl-2 (5Z,8Z,11Z,14Z)-eicosatetraenoyl-sn-glycero-3-phosphocholine + H2O = 1-(1Z-hexadecenyl)-sn-glycero-3-phosphocholine + (5Z,8Z,11Z,14Z)-eicosatetraenoate + H(+). It carries out the reaction 1-O-(1Z-hexadecenyl)-2-(9Z-octadecenoyl)-sn-glycero-3-phosphocholine + H2O = 1-(1Z-hexadecenyl)-sn-glycero-3-phosphocholine + (9Z)-octadecenoate + H(+). The enzyme catalyses 1-hexadecanoyl-sn-glycero-3-phosphocholine + H2O = sn-glycerol 3-phosphocholine + hexadecanoate + H(+). The catalysed reaction is 1',3'-bis-[1,2-di-(9Z,12Z-octadecadienoyl)-sn-glycero-3-phospho]-glycerol + H2O = 1'-[1,2-di-(9Z,12Z-octadecadienoyl)-sn-glycero-3-phospho]-3'-[1-(9Z,12Z-octadecadienoyl)-sn-glycero-3-phospho]-glycerol + (9Z,12Z)-octadecadienoate + H(+). It catalyses the reaction 1'-[1-acyl-2-(9-hydroxy-(10E,12Z)-octadecadienoyl)-sn-glycero-3-phospho]-3'-[1,2-diacyl-sn-glycero-3-phospho]-glycerol + H2O = 9-hydroxy-(10E,12Z)-octadecadienoate + 1'-[1,2-diacyl-sn-glycero-3-phospho],3'-[1-acyl-sn-glycero-3-phospho]-glycerol + H(+). It participates in phospholipid metabolism. Its activity is regulated as follows. Calcium-independent phospholipase. Calcium-independent and membrane-bound phospholipase, that catalyzes the esterolytic cleavage of fatty acids from glycerophospholipids to yield free fatty acids and lysophospholipids, hence regulating membrane physical properties and the release of lipid second messengers and growth factors. Hydrolyzes phosphatidylethanolamine, phosphatidylcholine and probably phosphatidylinositol with a possible preference for the former. Has also a broad substrate specificity in terms of fatty acid moieties, hydrolyzing saturated and mono-unsaturated fatty acids at nearly equal rates from either the sn-1 or sn-2 position in diacyl phosphatidylcholine. However, has a weak activity toward polyunsaturated fatty acids at the sn-2 position, and thereby favors the production of 2-arachidonoyl lysophosphatidylcholine, a key branch point metabolite in eicosanoid signaling. On the other hand, can produce arachidonic acid from the sn-1 position of diacyl phospholipid and from the sn-2 position of arachidonate-containing plasmalogen substrates. Therefore, plays an important role in the mobilization of arachidonic acid in response to cellular stimuli and the generation of lipid second messengers. Can also hydrolyze lysophosphatidylcholine. In the mitochondrial compartment, catalyzes the hydrolysis and release of oxidized aliphatic chains from cardiolipin and integrates mitochondrial bioenergetics and signaling. It is essential for maintaining efficient bioenergetic mitochondrial function through tailoring mitochondrial membrane lipid metabolism and composition. The sequence is that of Calcium-independent phospholipase A2-gamma from Oryctolagus cuniculus (Rabbit).